Reading from the N-terminus, the 408-residue chain is Innexin-12 (408 aa).

Residues 29-49 (TIGLVLASAFITGWSFVGSPI) traverse the membrane as a helical segment. N-linked (GlcNAc...) asparagine glycosylation is present at asparagine 99. 3 consecutive transmembrane segments (helical) span residues 113 to 133 (QWVPFILALQAMLFYFPVVIW), 197 to 217 (VITSYLFMKALFLINVLFQFV), and 284 to 304 (IFVALWWWLCFLTVVTITNTI).

The protein belongs to the pannexin family.

The protein resides in the cell membrane. Its subcellular location is the cell junction. The protein localises to the gap junction. In terms of biological role, structural component of the gap junctions. Plays a role in oocyte directional transit in the spermatheca during ovulation by facilitating the directional propagation of the calcium signal in the spermatheca. Plays a role in male tail tip morphogenesis. The chain is Innexin-12 from Caenorhabditis elegans.